Reading from the N-terminus, the 491-residue chain is Katanin p60 ATPase-containing subunit A1 (491 aa).

Positions 1 to 29 (MSLLMISENVKLAREYALLGNYDSAMVYY) are interaction with KATNB1. Residues 1–75 (MSLLMISENV…VKDIMKTLES (75 aa)) are interaction with dynein and NDEL1. The interval 1–185 (MSLLMISENV…EPETNKFDST (185 aa)) is interaction with microtubules. Residues Ser42 and Ser109 each carry the phosphoserine; by DYRK2 modification. The disordered stretch occupies residues 87–185 (QHDLPASEGE…EPETNKFDST (99 aa)). Thr133 is subject to Phosphothreonine; by DYRK2. Residues 145–169 (HNDRGKAVRCREKKEQNKGREEKNK) show a composition bias toward basic and acidic residues. Ser170 is subject to Phosphoserine. ATP is bound at residue 249 to 256 (GPPGTGKT).

Belongs to the AAA ATPase family. Katanin p60 subunit A1 subfamily. In terms of assembly, can homooligomerize into hexameric rings, which may be promoted by interaction with microtubules. Interacts with KATNB1, which may serve as a targeting subunit. Interacts with ASPM; the katanin complex formation KATNA1:KATNB1 is required for the association of ASPM Interacts with dynein and NDEL1. Associates with the E3 ligase complex containing DYRK2, EDD/UBR5, DDB1 and DCAF1 proteins (EDVP complex). Interacts with KLHL42 (via the kelch domains). Interacts with CUL3; the interaction is enhanced by KLHL42. Interacts with KATNB1 and KATNBL1. Interacts with CAMSAP2 and CAMSAP3; leading to regulate the length of CAMSAP-decorated microtubule stretches. Post-translationally, phosphorylation by DYRK2 triggers ubiquitination and subsequent degradation. In terms of processing, ubiquitinated by the BCR(KLHL42) E3 ubiquitin ligase complex, leading to its proteasomal degradation. Ubiquitinated by the EDVP E3 ligase complex and subsequently targeted for proteasomal degradation.

The protein localises to the cytoplasm. It localises to the midbody. It is found in the cytoskeleton. Its subcellular location is the microtubule organizing center. The protein resides in the centrosome. The protein localises to the spindle pole. It localises to the spindle. The catalysed reaction is n ATP + n H2O + a microtubule = n ADP + n phosphate + (n+1) alpha/beta tubulin heterodimers.. Its activity is regulated as follows. ATPase activity is stimulated by microtubules, which promote homooligomerization. ATP-dependent microtubule severing is stimulated by interaction with KATNB1. Its function is as follows. Catalytic subunit of a complex which severs microtubules in an ATP-dependent manner. Microtubule severing may promote rapid reorganization of cellular microtubule arrays and the release of microtubules from the centrosome following nucleation. Microtubule release from the mitotic spindle poles may allow depolymerization of the microtubule end proximal to the spindle pole, leading to poleward microtubule flux and poleward motion of chromosome. Microtubule release within the cell body of neurons may be required for their transport into neuronal processes by microtubule-dependent motor proteins. This transport is required for axonal growth. This chain is Katanin p60 ATPase-containing subunit A1, found in Macaca fascicularis (Crab-eating macaque).